Reading from the N-terminus, the 231-residue chain is Sugar fermentation stimulation protein homolog (231 aa).

This sequence belongs to the SfsA family.

This Geobacter sp. (strain M21) protein is Sugar fermentation stimulation protein homolog.